Consider the following 135-residue polypeptide: T-cell receptor gamma chain V region V108A (135 aa).

The signal sequence occupies residues 1–18 (MLLLRWFTSCCLWVFGLG). The segment at 19 to 116 (QLEQTELSVT…EATYYCAVWM (98 aa)) is v segment. The j segment stretch occupies residues 117–135 (RWSSGFHKVFAEGTKLIVI).

The sequence is that of T-cell receptor gamma chain V region V108A from Mus musculus (Mouse).